We begin with the raw amino-acid sequence, 387 residues long: Phosphoglycerate kinase (387 aa).

Substrate is bound by residues 21–23, arginine 36, 59–62, arginine 113, and arginine 146; these read DLN and HLGR. ATP is bound by residues lysine 197, glutamate 314, and 340-343; that span reads GGDT.

The protein belongs to the phosphoglycerate kinase family. As to quaternary structure, monomer.

Its subcellular location is the cytoplasm. The enzyme catalyses (2R)-3-phosphoglycerate + ATP = (2R)-3-phospho-glyceroyl phosphate + ADP. It functions in the pathway carbohydrate degradation; glycolysis; pyruvate from D-glyceraldehyde 3-phosphate: step 2/5. In Pseudomonas syringae pv. tomato (strain ATCC BAA-871 / DC3000), this protein is Phosphoglycerate kinase.